An 840-amino-acid chain; its full sequence is Microcephalin (840 aa).

Residues 1–93 (MAAHILKDVV…AHIDESLFPA (93 aa)) form the BRCT 1 domain. Residues 184–206 (KEKRENLSPSSSQMIQQSHDNPS) are disordered. Polar residues predominate over residues 190–206 (LSPSSSQMIQQSHDNPS). 4 positions are modified to phosphoserine: Ser279, Ser287, Ser296, and Ser333. Disordered regions lie at residues 313-379 (PDQK…SIRR) and 418-437 (PDNLKERNSENLPPTSQLPS). Thr335 bears the Phosphothreonine mark. Residues 355–378 (KRQRVSHGSHSPSKGKSKRKRSIR) show a composition bias toward basic residues. Polar residues predominate over residues 427 to 437 (ENLPPTSQLPS). At Ser552 the chain carries Phosphoserine. A disordered region spans residues 562–586 (LKSTQNKGTTSKISNSSEGEAQSEH). Polar residues predominate over residues 563 to 581 (KSTQNKGTTSKISNSSEGE). BRCT domains follow at residues 644 to 734 (SGRG…PFEL) and 755 to 837 (YRGT…NYLL).

In terms of assembly, interacts with CDC27 and maybe other components of the APC/C complex. Interacts with histone variant H2AX under DNA damage conditions.

The protein resides in the cytoplasm. It is found in the cytoskeleton. Its subcellular location is the microtubule organizing center. It localises to the centrosome. Implicated in chromosome condensation and DNA damage induced cellular responses. May play a role in neurogenesis and regulation of the size of the cerebral cortex. This Hylobates lar (Lar gibbon) protein is Microcephalin.